A 140-amino-acid polypeptide reads, in one-letter code: Small ribosomal subunit protein uS19 (140 aa).

The protein belongs to the universal ribosomal protein uS19 family.

In terms of biological role, protein S19 forms a complex with S13 that binds strongly to the 16S ribosomal RNA. This chain is Small ribosomal subunit protein uS19, found in Natronomonas pharaonis (strain ATCC 35678 / DSM 2160 / CIP 103997 / JCM 8858 / NBRC 14720 / NCIMB 2260 / Gabara) (Halobacterium pharaonis).